A 548-amino-acid polypeptide reads, in one-letter code: Probable malate:quinone oxidoreductase (548 aa).

The segment at 521–548 (DKPQAADSTPKPQLKPKPVQKEVADIAL) is disordered. Positions 539-548 (VQKEVADIAL) are enriched in basic and acidic residues.

The protein belongs to the MQO family. It depends on FAD as a cofactor.

The catalysed reaction is (S)-malate + a quinone = a quinol + oxaloacetate. The protein operates within carbohydrate metabolism; tricarboxylic acid cycle; oxaloacetate from (S)-malate (quinone route): step 1/1. The chain is Probable malate:quinone oxidoreductase from Escherichia coli (strain ATCC 8739 / DSM 1576 / NBRC 3972 / NCIMB 8545 / WDCM 00012 / Crooks).